The following is a 360-amino-acid chain: Mannonate dehydratase (360 aa).

The protein belongs to the mannonate dehydratase family. The cofactor is Fe(2+). Requires Mn(2+) as cofactor.

It catalyses the reaction D-mannonate = 2-dehydro-3-deoxy-D-gluconate + H2O. It functions in the pathway carbohydrate metabolism; pentose and glucuronate interconversion. Catalyzes the dehydration of D-mannonate. The sequence is that of Mannonate dehydratase (uxuA) from Thermotoga maritima (strain ATCC 43589 / DSM 3109 / JCM 10099 / NBRC 100826 / MSB8).